Reading from the N-terminus, the 424-residue chain is MTSSNLIKQLQERGLVAQVTDEDALAERLAQGPISLYCGFDPTADSLHLGHLVPLLCLKRFQLAGHRPVALVGGATGMIGDPSFKASERKLNTEDTVNEWVEKIRRQVSPFLDFDCGDNSAIAANNYDWFGGMNVLTFLRDIGKHFSVNQMINKEAVKQRLNRDDSGISFTEFSYNLLQAYDFACLNKAHGVALQIGGSDQWGNITSGIDLTRRLHQQQVYGLTVPLITKADGTKFGKTEGGAVWLDPKKTSPYKFYQFWINTADADVYRFLKFFTFMNLEEINALEEEDKNSGKAPRAQYVLAENVTGMVHGEEGLAAAKRITASLFSGDLNDMTEADFAQLAQDGMPTIELTRDADLQQALVNAELVPSRGQARTMISSNAVAINGEKQSDPEYAFTDADRLFGRYTLLRRGKKHYCLISWL.

Tyr37 is a binding site for L-tyrosine. A 'HIGH' region motif is present at residues 42-51 (PTADSLHLGH). 2 residues coordinate L-tyrosine: Tyr175 and Gln179. The 'KMSKS' region signature appears at 235–239 (KFGKT). Lys238 serves as a coordination point for ATP. Positions 357–414 (ADLQQALVNAELVPSRGQARTMISSNAVAINGEKQSDPEYAFTDADRLFGRYTLLRRG) constitute an S4 RNA-binding domain.

The protein belongs to the class-I aminoacyl-tRNA synthetase family. TyrS type 1 subfamily. Homodimer.

Its subcellular location is the cytoplasm. It catalyses the reaction tRNA(Tyr) + L-tyrosine + ATP = L-tyrosyl-tRNA(Tyr) + AMP + diphosphate + H(+). Functionally, catalyzes the attachment of tyrosine to tRNA(Tyr) in a two-step reaction: tyrosine is first activated by ATP to form Tyr-AMP and then transferred to the acceptor end of tRNA(Tyr). The polypeptide is Tyrosine--tRNA ligase (Yersinia enterocolitica serotype O:8 / biotype 1B (strain NCTC 13174 / 8081)).